Here is a 263-residue protein sequence, read N- to C-terminus: (R)-S-adenosyl-L-methionine hydrolase (263 aa).

Adenosine-binding residues include D18, D82, and N181. Residues N181, Y221, S234, E239, and M244 each contribute to the (R)-S-adenosyl-L-methionine site.

It belongs to the SAM hydrolase / SAM-dependent halogenase family. In terms of assembly, homotrimer.

The catalysed reaction is (R)-S-adenosyl-L-methionine + H2O = adenosine + L-methionine + H(+). In terms of biological role, catalyzes the hydrolysis of S-adenosyl-L-methionine (SAM) into adenosine and L-methionine. Does not have chlorinase or fluorinase activity. This is (R)-S-adenosyl-L-methionine hydrolase from Methanocaldococcus jannaschii (strain ATCC 43067 / DSM 2661 / JAL-1 / JCM 10045 / NBRC 100440) (Methanococcus jannaschii).